Reading from the N-terminus, the 78-residue chain is U7-lycotoxin-Ls1a (78 aa).

The N-terminal stretch at 1–22 (MKLIIFTGLALLLIVSLIDVEA) is a signal peptide. A propeptide spanning residues 23–26 (QNEG) is cleaved from the precursor.

This sequence belongs to the neurotoxin 19 (CSTX) family. 07 (U7-Lctx) subfamily. Post-translationally, contains 4 disulfide bonds. As to expression, expressed by the venom gland.

The protein localises to the secreted. The protein is U7-lycotoxin-Ls1a of Lycosa singoriensis (Wolf spider).